A 463-amino-acid chain; its full sequence is Cytochrome P450 4d8 (463 aa).

Heme-binding residues include Glu-267 and Cys-409.

Belongs to the cytochrome P450 family. It depends on heme as a cofactor.

The protein localises to the endoplasmic reticulum membrane. Its subcellular location is the microsome membrane. In terms of biological role, may be involved in the metabolism of insect hormones and in the breakdown of synthetic insecticides. The sequence is that of Cytochrome P450 4d8 (Cyp4d8) from Drosophila melanogaster (Fruit fly).